Consider the following 136-residue polypeptide: Ribosome-binding factor A (136 aa).

The protein belongs to the RbfA family. In terms of assembly, monomer. Binds 30S ribosomal subunits, but not 50S ribosomal subunits or 70S ribosomes.

The protein localises to the cytoplasm. One of several proteins that assist in the late maturation steps of the functional core of the 30S ribosomal subunit. Associates with free 30S ribosomal subunits (but not with 30S subunits that are part of 70S ribosomes or polysomes). Required for efficient processing of 16S rRNA. May interact with the 5'-terminal helix region of 16S rRNA. The chain is Ribosome-binding factor A from Photorhabdus laumondii subsp. laumondii (strain DSM 15139 / CIP 105565 / TT01) (Photorhabdus luminescens subsp. laumondii).